Here is a 433-residue protein sequence, read N- to C-terminus: Histidinol dehydrogenase (433 aa).

3 residues coordinate NAD(+): Tyr133, Gln194, and Asn217. Ser240, Gln262, and His265 together coordinate substrate. 2 residues coordinate Zn(2+): Gln262 and His265. Residues Glu330 and His331 each act as proton acceptor in the active site. Substrate is bound by residues His331, Asp364, Glu418, and His423. Position 364 (Asp364) interacts with Zn(2+). His423 provides a ligand contact to Zn(2+).

This sequence belongs to the histidinol dehydrogenase family. Requires Zn(2+) as cofactor.

The catalysed reaction is L-histidinol + 2 NAD(+) + H2O = L-histidine + 2 NADH + 3 H(+). It functions in the pathway amino-acid biosynthesis; L-histidine biosynthesis; L-histidine from 5-phospho-alpha-D-ribose 1-diphosphate: step 9/9. In terms of biological role, catalyzes the sequential NAD-dependent oxidations of L-histidinol to L-histidinaldehyde and then to L-histidine. The chain is Histidinol dehydrogenase from Dechloromonas aromatica (strain RCB).